We begin with the raw amino-acid sequence, 299 residues long: Putative transposase InsZ (299 aa).

Positions 276 to 291 (PSRPRSVKISKTRYPV) are enriched in basic residues. Residues 276 to 299 (PSRPRSVKISKTRYPVKHSAAPLK) are disordered.

This Escherichia coli (strain K12) protein is Putative transposase InsZ (insZ).